A 1095-amino-acid polypeptide reads, in one-letter code: DNA-directed RNA polymerase subunit beta (1095 aa).

Positions 1069-1095 (DLMQDVNPRRSTPSRPTYESLGKEYEE) are disordered.

It belongs to the RNA polymerase beta chain family. In terms of assembly, in cyanobacteria the RNAP catalytic core is composed of 2 alpha, 1 beta, 1 beta', 1 gamma and 1 omega subunit. When a sigma factor is associated with the core the holoenzyme is formed, which can initiate transcription.

It catalyses the reaction RNA(n) + a ribonucleoside 5'-triphosphate = RNA(n+1) + diphosphate. Its function is as follows. DNA-dependent RNA polymerase catalyzes the transcription of DNA into RNA using the four ribonucleoside triphosphates as substrates. The sequence is that of DNA-directed RNA polymerase subunit beta from Prochlorococcus marinus (strain NATL2A).